Here is a 648-residue protein sequence, read N- to C-terminus: Beta-glucuronidase (648 aa).

Residues 1-19 (GLAMAWAVLGPLLWGCALA) form the signal peptide. N-linked (GlcNAc...) asparagine glycosylation is found at Asn-170, Asn-269, and Asn-417. Glu-448 serves as the catalytic Proton donor. Asn-628 is a glycosylation site (N-linked (GlcNAc...) asparagine).

It belongs to the glycosyl hydrolase 2 family. As to quaternary structure, homotetramer.

It is found in the lysosome. It catalyses the reaction a beta-D-glucuronoside + H2O = D-glucuronate + an alcohol. Inhibited by L-aspartic acid. Its function is as follows. Plays an important role in the degradation of dermatan and keratan sulfates. This is Beta-glucuronidase (GUSB) from Chlorocebus aethiops (Green monkey).